A 165-amino-acid polypeptide reads, in one-letter code: MALAEADDGAVVFGEEQEALVLKSWAVMKKDAANLGLRFFLKVFEIAPSAKQMFSFLRDSDVPLEKNPKLKTHAMSVFVMTCEAAAQLRKAGKVTVRETTLKRLGATHLRYGVADGHFEVTGFALLETIKEALPADMWSLEMKKAWAEAYSQLVAAIKREMKPDA.

A Globin domain is found at Val12 to Lys162. The Homodimerization motif lies at Glu45–Ser49. The heme b site is built by Ser55, Lys69, His73, Arg103, Thr107, and His108. The Homodimerization motif lies at Asp115–Glu127.

It belongs to the plant globin family. In terms of assembly, homodimer. It depends on heme b as a cofactor. In vegetative but not in embryonic organs.

The protein resides in the cytoplasm. The protein localises to the nucleus. The catalysed reaction is Fe(III)-heme b-[protein] + nitric oxide + H2O = Fe(II)-heme b-[protein] + nitrite + 2 H(+). In terms of biological role, phytoglobin that reduces nitrite to nitric oxide (NO) under anoxic conditions (e.g. during flooding or in waterlogged soil). May not function as an oxygen storage or transport protein. Has an unusually high affinity for O(2) through an hexacoordinate heme iron because of a very low dissociation constant. In Zea mays subsp. parviglumis (Balsas teosinte), this protein is Anaerobic nitrite reductase GLB1 (HB).